A 337-amino-acid chain; its full sequence is Phosphate acyltransferase (337 aa).

The protein belongs to the PlsX family. Homodimer. Probably interacts with PlsY.

The protein resides in the cytoplasm. It carries out the reaction a fatty acyl-[ACP] + phosphate = an acyl phosphate + holo-[ACP]. The protein operates within lipid metabolism; phospholipid metabolism. Functionally, catalyzes the reversible formation of acyl-phosphate (acyl-PO(4)) from acyl-[acyl-carrier-protein] (acyl-ACP). This enzyme utilizes acyl-ACP as fatty acyl donor, but not acyl-CoA. The sequence is that of Phosphate acyltransferase from Ehrlichia chaffeensis (strain ATCC CRL-10679 / Arkansas).